An 88-amino-acid chain; its full sequence is Small ribosomal subunit protein uS17 (88 aa).

The protein belongs to the universal ribosomal protein uS17 family. In terms of assembly, part of the 30S ribosomal subunit.

Its function is as follows. One of the primary rRNA binding proteins, it binds specifically to the 5'-end of 16S ribosomal RNA. The polypeptide is Small ribosomal subunit protein uS17 (Mycoplasmopsis pulmonis (strain UAB CTIP) (Mycoplasma pulmonis)).